Reading from the N-terminus, the 435-residue chain is Keratin, type I cytoskeletal 18 (435 aa).

Residues 2–84 (SYRPGSYSVS…SVSGSGLVGN (83 aa)) form a head region. The coil 1A stretch occupies residues 85–120 (EKETMIGLNDRLAAYLETVRNLEQANSKLEFQIREA). The 312-residue stretch at 85–396 (EKETMIGLND…RLLDGEDFRL (312 aa)) folds into the IF rod domain. The tract at residues 121-137 (LEKKGPTTRDLSPFEKT) is linker 1. Residues 138–229 (LEDLRKKVYD…QNHNQEVNDL (92 aa)) form a coil 1B region. Residues 230-253 (RNQIAQSGVQVDVDAPKGQDLAQV) form a linker 12 region. Residues 254–391 (LAEVRAQYES…IATYRRLLDG (138 aa)) are coil 2. The segment at 392-435 (EDFRLQDALVDQSSTKSIKKVTVTQTLVDGKVVSESTNTKEIGK) is tail.

This sequence belongs to the intermediate filament family. Heterotetramer of two type I and two type II keratins. Keratin-18 associates with keratin-8. In terms of processing, phosphorylated. Proteolytically cleaved by caspases during epithelial cell apoptosis.

In terms of biological role, when phosphorylated, plays a role in filament reorganization. The sequence is that of Keratin, type I cytoskeletal 18 from Acipenser baerii (Siberian sturgeon).